Here is a 339-residue protein sequence, read N- to C-terminus: Ribosomal RNA small subunit methyltransferase H (339 aa).

S-adenosyl-L-methionine is bound by residues 40 to 42 (GGY), aspartate 58, phenylalanine 85, aspartate 106, and glutamine 113.

This sequence belongs to the methyltransferase superfamily. RsmH family.

It is found in the cytoplasm. The enzyme catalyses cytidine(1402) in 16S rRNA + S-adenosyl-L-methionine = N(4)-methylcytidine(1402) in 16S rRNA + S-adenosyl-L-homocysteine + H(+). Its function is as follows. Specifically methylates the N4 position of cytidine in position 1402 (C1402) of 16S rRNA. The sequence is that of Ribosomal RNA small subunit methyltransferase H from Parvibaculum lavamentivorans (strain DS-1 / DSM 13023 / NCIMB 13966).